The following is a 1055-amino-acid chain: Pre-mRNA-splicing factor ATP-dependent RNA helicase-like protein cdc28 (1055 aa).

Basic and acidic residues predominate over residues 67 to 78 (PREGSRPKENYN). The disordered stretch occupies residues 67–184 (PREGSRPKEN…TERLNDLRER (118 aa)). Basic residues predominate over residues 112–121 (PLKKKSRSKT). Residues 122–132 (PKREIARRQRD) are compositionally biased toward basic and acidic residues. Acidic residues predominate over residues 133-145 (EDEWESDEYEEVV). Positions 163–184 (QNHDYEKSSDPETERLNDLRER) are enriched in basic and acidic residues. Residues 428–592 (LKAINEYQVL…FDEAPVFYVP (165 aa)) enclose the Helicase ATP-binding domain. Position 441–448 (441–448 (AETGSGKT)) interacts with ATP. The DEAH box motif lies at 539–542 (DEAH). The 174-residue stretch at 617 to 790 (TILQIHTTQP…NIVLLLKSLG (174 aa)) folds into the Helicase C-terminal domain.

It belongs to the DEAD box helicase family. DEAH subfamily. DDX16/PRP8 sub-subfamily.

The protein localises to the nucleus. The catalysed reaction is ATP + H2O = ADP + phosphate + H(+). Functionally, involved in pre-mRNA splicing. Is required together with ATP and at least one other factor, for the first cleavage-ligation reaction. Functions as a molecular motor in the activation of the precatalytic spliceosome for the first transesterification reaction of pre-mRNA splicing by hydrolyzing ATP to cause the activation of the spliceosome without the occurrence of splicing. This Schizosaccharomyces pombe (strain 972 / ATCC 24843) (Fission yeast) protein is Pre-mRNA-splicing factor ATP-dependent RNA helicase-like protein cdc28 (cdc28).